The primary structure comprises 405 residues: Tyrosine--tRNA ligase (405 aa).

The 'HIGH' region signature appears at 46–55 (PTRPDIHLGH). Residues 230-234 (KMSKS) carry the 'KMSKS' region motif. Position 233 (Lys-233) interacts with ATP. The region spanning 341 to 404 (MGLAALMVKA…GKKKFVKIVV (64 aa)) is the S4 RNA-binding domain.

The protein belongs to the class-I aminoacyl-tRNA synthetase family. TyrS type 2 subfamily. Homodimer.

The protein localises to the cytoplasm. The enzyme catalyses tRNA(Tyr) + L-tyrosine + ATP = L-tyrosyl-tRNA(Tyr) + AMP + diphosphate + H(+). Catalyzes the attachment of tyrosine to tRNA(Tyr) in a two-step reaction: tyrosine is first activated by ATP to form Tyr-AMP and then transferred to the acceptor end of tRNA(Tyr). The polypeptide is Tyrosine--tRNA ligase (Bdellovibrio bacteriovorus (strain ATCC 15356 / DSM 50701 / NCIMB 9529 / HD100)).